Reading from the N-terminus, the 357-residue chain is Chorismate synthase (357 aa).

Residue Arg-46 coordinates NADP(+). Residues 123–125 (RSS), 235–236 (NA), Gly-275, 290–294 (KPTPS), and Arg-316 contribute to the FMN site.

This sequence belongs to the chorismate synthase family. Homotetramer. FMNH2 serves as cofactor.

It catalyses the reaction 5-O-(1-carboxyvinyl)-3-phosphoshikimate = chorismate + phosphate. It functions in the pathway metabolic intermediate biosynthesis; chorismate biosynthesis; chorismate from D-erythrose 4-phosphate and phosphoenolpyruvate: step 7/7. Functionally, catalyzes the anti-1,4-elimination of the C-3 phosphate and the C-6 proR hydrogen from 5-enolpyruvylshikimate-3-phosphate (EPSP) to yield chorismate, which is the branch point compound that serves as the starting substrate for the three terminal pathways of aromatic amino acid biosynthesis. This reaction introduces a second double bond into the aromatic ring system. The polypeptide is Chorismate synthase (Sulfurovum sp. (strain NBC37-1)).